A 104-amino-acid chain; its full sequence is Cytochrome c-551 (104 aa).

A signal peptide spans 1–22; the sequence is MKPYALLSLLATGTLLAQGAWA. Residues Cys34, Cys37, His38, and Met83 each contribute to the heme c site.

In terms of processing, binds 1 heme c group covalently per subunit.

It localises to the periplasm. Its function is as follows. Electron donor for cytochrome cd1 in nitrite and nitrate respiration. This Pseudomonas aeruginosa (strain ATCC 15692 / DSM 22644 / CIP 104116 / JCM 14847 / LMG 12228 / 1C / PRS 101 / PAO1) protein is Cytochrome c-551 (nirM).